A 398-amino-acid chain; its full sequence is Steroid C26-monooxygenase (398 aa).

Heme is bound at residue C340.

Belongs to the cytochrome P450 family. The cofactor is heme.

The enzyme catalyses cholest-4-en-3-one + 6 reduced [2Fe-2S]-[ferredoxin] + 3 O2 + 5 H(+) = (25R)-3-oxocholest-4-en-26-oate + 6 oxidized [2Fe-2S]-[ferredoxin] + 4 H2O. It catalyses the reaction cholest-4-en-3-one + 2 reduced [2Fe-2S]-[ferredoxin] + O2 + 2 H(+) = (25R)-3-oxocholest-4-en-26-ol + 2 oxidized [2Fe-2S]-[ferredoxin] + H2O. It carries out the reaction (25R)-3-oxocholest-4-en-26-ol + 2 reduced [2Fe-2S]-[ferredoxin] + O2 + 2 H(+) = (25R)-3-oxocholest-4-en-26-al + 2 oxidized [2Fe-2S]-[ferredoxin] + 2 H2O. The catalysed reaction is (25R)-3-oxocholest-4-en-26-al + 2 reduced [2Fe-2S]-[ferredoxin] + O2 + H(+) = (25R)-3-oxocholest-4-en-26-oate + 2 oxidized [2Fe-2S]-[ferredoxin] + H2O. The enzyme catalyses cholesterol + NADPH + O2 + H(+) = 26-hydroxycholesterol + NADP(+) + H2O. It catalyses the reaction 26-hydroxycholesterol + 2 reduced [2Fe-2S]-[ferredoxin] + O2 + 2 H(+) = (3beta)-hydroxy-cholest-5-en-26-al + 2 oxidized [2Fe-2S]-[ferredoxin] + 2 H2O. It carries out the reaction (3beta)-hydroxy-cholest-5-en-26-al + NADPH + O2 = (3beta)-hydroxy-cholest-5-en-26-oate + NADP(+) + H2O. The catalysed reaction is (25S)-3-oxocholest-4-en-26-ol + 2 reduced [2Fe-2S]-[ferredoxin] + O2 + 2 H(+) = (25S)-3-oxocholest-4-en-26-al + 2 oxidized [2Fe-2S]-[ferredoxin] + 2 H2O. The enzyme catalyses (25S)-3-oxocholest-4-en-26-al + 2 reduced [2Fe-2S]-[ferredoxin] + O2 + H(+) = (25S)-3-oxocholest-4-en-26-oate + 2 oxidized [2Fe-2S]-[ferredoxin] + H2O. Its pathway is steroid metabolism; cholesterol degradation. With respect to regulation, inhibited by econazole, clotrimazole and miconazole. Involved in the utilization of cholesterol as the sole carbon and energy source by degrading the side chain during infection. Primarily catalyzes the sequential oxidation of the terminal methyl of cholest-4-en-3-one into (25R)-26-hydroxycholest-4-en-3-one (alcohol), (25R)-26-oxocholest-4-en-3-one (aldehyde), to finally yield the carboxylic acid (25R)-3-oxocholest-4-en-26-oate. In vitro, Cyp142 catalyzes with equal preference the oxidation of both (25R)- and (25S)-26-hydroxycholest-4-en-3-one diastereomers to the corresponding carboxylic acid which is a prerequisite for entry into the beta-oxidation pathway. Also able to sequentially oxidize cholesterol itself, not only cholest-4-en-3-one. In Mycobacterium tuberculosis (strain ATCC 25618 / H37Rv), this protein is Steroid C26-monooxygenase (cyp142).